The primary structure comprises 2113 residues: Unconventional myosin-VIIb (2113 aa).

In terms of domain architecture, Myosin motor spans 65-760 (QGVDDMIRLG…QDTVLEIRRS (696 aa)). Residue 158–165 (GESGAGKT) participates in ATP binding. Positions 637–659 (LDQLMRILTNCQPYFVRCIKPNE) are actin-binding. 6 IQ domains span residues 745–765 (IFLK…ALDG), 763–792 (LDGA…AAVT), 786–815 (QRRA…GFER), 809–838 (ILVG…RIVQ), 832–861 (MRQR…AVVI), and 855–884 (KRRA…TGPQ). Serine 904 carries the phosphoserine modification. Residues 962 to 1578 (EEEVDSLAEY…STQLLSLLAM (617 aa)) are mediates interaction with ANKS4B. Residues 989-1189 (HIQKPLRYPL…PTWLELQAVK (201 aa)) enclose the MyTH4 1 domain. The 310-residue stretch at 1194-1503 (IPIQVILATG…GGLKERSVFA (310 aa)) folds into the FERM 1 domain. A Phosphothreonine modification is found at threonine 1339. Serine 1368 carries the phosphoserine modification. Positions 1497 to 2113 (KERSVFAMAL…GFRAPAPANP (617 aa)) are mediates interaction with CDHR2, CDHR5 and USH1C. Residues 1498–1564 (ERSVFAMALQ…PTACLYTIPS (67 aa)) form the SH3 domain. 2 MyTH4 domains span residues 1641–1790 (YSPE…KAAE) and 1790–1896 (EQNV…LNVT). Serine 1642 carries the post-translational modification Phosphoserine. In terms of domain architecture, FERM 2 spans 1796–2099 (LHHEVYLPND…SYVQQLLNTV (304 aa)).

Belongs to the TRAFAC class myosin-kinesin ATPase superfamily. Myosin family. In terms of assembly, part of the IMAC/intermicrovillar adhesion complex/intermicrovillar tip-link complex composed of ANKS4B, MYO7B, USH1C, CDHR2 and CDHR5. Interacts with CDHR2. Interacts with CDHR5. Interacts with USH1C. Interacts with ANKS4B; requires initial interaction with USH1C. Interacts with CALML4; the interaction mediates the association of CALML4 with the IMAC/intermicrovillar adhesion complex. As to expression, expressed primarily in kidney and intestine. Detected in proximal tubule cells of the kidney and enterocytes of the intestine, specifically the distal tips of apical microvilli on these transporting epithelial cells (at protein level).

The protein localises to the cytoplasm. It is found in the cytoskeleton. Its subcellular location is the cell projection. It localises to the microvillus. In terms of biological role, myosins are actin-based motor molecules with ATPase activity. Their highly divergent tails are presumed to bind to membranous compartments, which would be moved relative to actin filaments. As part of the intermicrovillar adhesion complex/IMAC plays a role in epithelial brush border differentiation, controlling microvilli organization and length. May link the complex to the actin core bundle of microvilli. The protein is Unconventional myosin-VIIb (Myo7b) of Mus musculus (Mouse).